The chain runs to 194 residues: ATP-dependent Clp protease proteolytic subunit 4 (194 aa).

The active-site Nucleophile is the Ser100. His125 is a catalytic residue.

This sequence belongs to the peptidase S14 family. As to quaternary structure, fourteen ClpP subunits assemble into 2 heptameric rings which stack back to back to give a disk-like structure with a central cavity, resembling the structure of eukaryotic proteasomes.

The protein localises to the cytoplasm. The catalysed reaction is Hydrolysis of proteins to small peptides in the presence of ATP and magnesium. alpha-casein is the usual test substrate. In the absence of ATP, only oligopeptides shorter than five residues are hydrolyzed (such as succinyl-Leu-Tyr-|-NHMec, and Leu-Tyr-Leu-|-Tyr-Trp, in which cleavage of the -Tyr-|-Leu- and -Tyr-|-Trp bonds also occurs).. In terms of biological role, cleaves peptides in various proteins in a process that requires ATP hydrolysis. Has a chymotrypsin-like activity. Plays a major role in the degradation of misfolded proteins. This is ATP-dependent Clp protease proteolytic subunit 4 from Rhodococcus jostii (strain RHA1).